A 200-amino-acid polypeptide reads, in one-letter code: Signal peptidase complex catalytic subunit SEC11 (200 aa).

Residues 1–15 (MFAELAPYLSNPRQT) are Cytoplasmic-facing. The helical; Signal-anchor for type II membrane protein transmembrane segment at 16–33 (LAQILNFALVLSTAFMGW) threads the bilayer. The Lumenal segment spans residues 34–200 (KALSVYTNSS…MGVMVMLQRE (167 aa)). N-linked (GlcNAc...) asparagine glycosylation is present at Asn41. Catalysis depends on charge relay system residues Ser53 and His92. The tract at residues 101 to 131 (GDGGKKSQRRLEKEADKRSGPGLSSPISHQM) is disordered. Positions 103–119 (GGKKSQRRLEKEADKRS) are enriched in basic and acidic residues. The active-site Charge relay system is Asp142. Residues 186 to 197 (VLLGIMGVMVML) are C-terminal short (CTS) helix.

This sequence belongs to the peptidase S26B family. Component of the signal peptidase complex (SPC) composed of a catalytic subunit SEC11 and three accessory subunits SPC1, SPC2 and SPC3. The complex induces a local thinning of the ER membrane which is used to measure the length of the signal peptide (SP) h-region of protein substrates. This ensures the selectivity of the complex towards h-regions shorter than 18-20 amino acids. SPC associates with the translocon complex.

It localises to the endoplasmic reticulum membrane. It catalyses the reaction Cleavage of hydrophobic, N-terminal signal or leader sequences from secreted and periplasmic proteins.. Its function is as follows. Catalytic component of the signal peptidase complex (SPC) which catalyzes the cleavage of N-terminal signal sequences from nascent proteins as they are translocated into the lumen of the endoplasmic reticulum. Specifically cleaves N-terminal signal peptides that contain a hydrophobic alpha-helix (h-region) shorter than 18-20 amino acids. This is Signal peptidase complex catalytic subunit SEC11 (SEC11) from Arthroderma gypseum (strain ATCC MYA-4604 / CBS 118893) (Microsporum gypseum).